The sequence spans 474 residues: tRNA-2-methylthio-N(6)-dimethylallyladenosine synthase (474 aa).

An MTTase N-terminal domain is found at 3-120; it reads QKLHIKTWGC…LPEMINQIRG (118 aa). 6 residues coordinate [4Fe-4S] cluster: cysteine 12, cysteine 49, cysteine 83, cysteine 157, cysteine 161, and cysteine 164. Residues 143–375 enclose the Radical SAM core domain; it reads RAEGPTAFVS…QERINQQAAQ (233 aa). Residues 378 to 441 enclose the TRAM domain; it reads RRMLGTEQRV…TNSLRGEVVR (64 aa).

This sequence belongs to the methylthiotransferase family. MiaB subfamily. In terms of assembly, monomer. Requires [4Fe-4S] cluster as cofactor.

It is found in the cytoplasm. The enzyme catalyses N(6)-dimethylallyladenosine(37) in tRNA + (sulfur carrier)-SH + AH2 + 2 S-adenosyl-L-methionine = 2-methylsulfanyl-N(6)-dimethylallyladenosine(37) in tRNA + (sulfur carrier)-H + 5'-deoxyadenosine + L-methionine + A + S-adenosyl-L-homocysteine + 2 H(+). In terms of biological role, catalyzes the methylthiolation of N6-(dimethylallyl)adenosine (i(6)A), leading to the formation of 2-methylthio-N6-(dimethylallyl)adenosine (ms(2)i(6)A) at position 37 in tRNAs that read codons beginning with uridine. The sequence is that of tRNA-2-methylthio-N(6)-dimethylallyladenosine synthase from Haemophilus influenzae (strain PittGG).